The following is a 68-amino-acid chain: Large ribosomal subunit protein uL29 (68 aa).

This sequence belongs to the universal ribosomal protein uL29 family.

The protein is Large ribosomal subunit protein uL29 of Acidiphilium cryptum (strain JF-5).